The primary structure comprises 81 residues: ATP synthase subunit c, chloroplastic (81 aa).

2 helical membrane passes run 3 to 23 (PIIS…ASIG) and 57 to 77 (LAFM…LLFA).

The protein belongs to the ATPase C chain family. As to quaternary structure, F-type ATPases have 2 components, F(1) - the catalytic core - and F(0) - the membrane proton channel. F(1) has five subunits: alpha(3), beta(3), gamma(1), delta(1), epsilon(1). F(0) has four main subunits: a(1), b(1), b'(1) and c(10-14). The alpha and beta chains form an alternating ring which encloses part of the gamma chain. F(1) is attached to F(0) by a central stalk formed by the gamma and epsilon chains, while a peripheral stalk is formed by the delta, b and b' chains.

It localises to the plastid. The protein resides in the chloroplast thylakoid membrane. In terms of biological role, f(1)F(0) ATP synthase produces ATP from ADP in the presence of a proton or sodium gradient. F-type ATPases consist of two structural domains, F(1) containing the extramembraneous catalytic core and F(0) containing the membrane proton channel, linked together by a central stalk and a peripheral stalk. During catalysis, ATP synthesis in the catalytic domain of F(1) is coupled via a rotary mechanism of the central stalk subunits to proton translocation. Functionally, key component of the F(0) channel; it plays a direct role in translocation across the membrane. A homomeric c-ring of between 10-14 subunits forms the central stalk rotor element with the F(1) delta and epsilon subunits. The polypeptide is ATP synthase subunit c, chloroplastic (Cicer arietinum (Chickpea)).